The chain runs to 643 residues: MPLLFLERFPWPSLRTYTGLSGLALLGTIVSAYRALSQPEDGSGEPEPLTAPLQPEALAPARLTAGGPRARDVAQYLLSDSLFVWVLVNTACCVLMLVAKLIQCIVFGPLRVSERQHLKDKFWNFIFYKFIFIFGVLNVQTVEEVVMWCLWFAGLVFLHLMVQLCKDRFEYLSFSPTTPMSSHGRVLSLLIAMLLSCCGLAVVCCVTGYTHGMHTLAFMAAESLLVTVRTAHVILRYVIHLWDLNHEGTWEGKGTYVYYTDFVMELALLSLDLMHHIHMLLFGNIWLSMASLVIFMQLRYLFHEVQRRIRRHKNYLRVVGNMEARFAVATPEELAVNNDDCAICWDSMQAARKLPCGHLFHNSCLRSWLEQDTSCPTCRMSLNIADGSRAREDHQGENLDENLVPVAAAEGRPRLNQHNHFFHFDGSRIASWLPSFSVEVMHTTNILGITQASNSQLNAMAHQIQEMFPQVPYHLVLQDLQMTRSVEITTDNILEGRIQVPFPTQRSDSLRPALNSPVERPSPDLEEGEASVQTERVPLDLSPRLEETLDFSEVELEPIEVEDFEARGSRFSKSADERQRMLVQRKDDLLQQARKRFLNKSSEDDGASERLLPSEGTSSDPVTLRRRMLAAAAERRLQRQRTT.

A run of 6 helical transmembrane segments spans residues 82-102, 122-142, 186-206, 215-235, 254-274, and 276-296; these read LFVWVLVNTACCVLMLVAKLI, FWNFIFYKFIFIFGVLNVQTV, VLSLLIAMLLSCCGLAVVCCV, TLAFMAAESLLVTVRTAHVIL, GTYVYYTDFVMELALLSLDLM, and HIHMLLFGNIWLSMASLVIFM. The segment at 341–379 adopts an RING-type zinc-finger fold; that stretch reads CAICWDSMQAARKLPCGHLFHNSCLRSWLEQDTSCPTCR. The chain crosses the membrane as a helical span at residues 429-449; sequence IASWLPSFSVEVMHTTNILGI. The region spanning 456-498 is the CUE domain; it reads QLNAMAHQIQEMFPQVPYHLVLQDLQMTRSVEITTDNILEGRI. The tract at residues 504–535 is disordered; sequence TQRSDSLRPALNSPVERPSPDLEEGEASVQTE. A phosphoserine mark is found at Ser-516 and Ser-542. A disordered region spans residues 598–624; that stretch reads LNKSSEDDGASERLLPSEGTSSDPVTL. The interval 622–640 is VCP/p97-interacting motif (VIM); it reads VTLRRRMLAAAAERRLQRQ.

Interacts with RNF5. Also forms an ERAD complex containing VCP/p97, NGLY1; PSMC1; SAKS1 and RAD23B required for coupling retrotranslocation, ubiquitination and deglycosylation. Interacts with DERL1. Interacts (through a region distinct from the RING finger) with UBE2G2/UBC7. Component of the VCP/p97-AMFR/gp78 complex that enhances VCP/p97 binding to polyubiquitinated proteins for their degradation by the endoplasmic reticulum-associated degradation (ERAD) pathway. Interacts (via the VIM) with VCP/p97. Interacts (via its membrane domain) with INSIG1; the interaction initiates the sterol-mediated ubiquitination and degradation of HMGCR by the ERAD pathway. Interacts with AUP1, UBE2G2 and RNF139/TRC8; interaction with AUP1 facilitates interaction of AMFR with ubiquitin-conjugating enzyme UBE2G2 and ubiquitin ligase RNF139, leading to sterol-induced ubiquitination of HNGCR and its subsequent proteasomal degradation. Interacts with BAG6. Interacts with USP13 (via UBA 2 domain); the interaction is direct. Interacts with LMBR1L, UBAC2 and CTNNB1. Interacts with C18orf32. Palmitoylation of the RING-type zing finger by ZDHHC6 promotes localization to the peripheral endoplasmic reticulum. Expressed in heart, brain, liver, lung, skeletal muscle, kidney and testis. Not detected in spleen.

The protein localises to the endoplasmic reticulum membrane. The catalysed reaction is [E2 ubiquitin-conjugating enzyme]-S-ubiquitinyl-L-cysteine + [acceptor protein]-L-cysteine = [E2 ubiquitin-conjugating enzyme]-L-cysteine + [acceptor protein]-S-ubiquitinyl-L-cysteine.. Its pathway is protein modification; protein ubiquitination. In terms of biological role, E3 ubiquitin-protein ligase that mediates the polyubiquitination of lysine and cysteine residues on target proteins, such as CD3D, CYP3A4, CFTR, INSIG1, SOAT2/ACAT2 and APOB for proteasomal degradation. Component of a VCP/p97-AMFR/gp78 complex that participates in the final step of endoplasmic reticulum-associated degradation (ERAD). The VCP/p97-AMFR/gp78 complex is involved in the sterol-accelerated ERAD degradation of HMGCR through binding to the HMGCR-INSIG1 complex at the ER membrane. In addition, interaction of AMFR with AUP1 facilitates interaction of AMFR with ubiquitin-conjugating enzyme UBE2G2 and ubiquitin ligase RNF139, leading to sterol-induced HMGCR ubiquitination. The ubiquitinated HMGCR is then released from the ER by the complex into the cytosol for subsequent destruction. In addition to ubiquitination on lysine residues, catalyzes ubiquitination on cysteine residues: together with INSIG1, mediates polyubiquitination of SOAT2/ACAT2 at 'Cys-277', leading to its degradation when the lipid levels are low. Catalyzes ubiquitination and subsequent degradation of INSIG1 when cells are depleted of sterols. Mediates polyubiquitination of INSIG2 at 'Cys-215' in some tissues, leading to its degradation. Also regulates ERAD through the ubiquitination of UBL4A a component of the BAG6/BAT3 complex. Also acts as a scaffold protein to assemble a complex that couples ubiquitination, retranslocation and deglycosylation. Mediates tumor invasion and metastasis as a receptor for the GPI/autocrine motility factor. In association with LMBR1L and UBAC2, negatively regulates the canonical Wnt signaling pathway in the lymphocytes by promoting the ubiquitin-mediated degradation of CTNNB1 and Wnt receptors FZD6 and LRP6. Regulates NF-kappa-B and MAPK signaling pathways by mediating 'Lys-27'-linked polyubiquitination of TAB3 and promoting subsequent TAK1/MAP3K7 activation. The polypeptide is E3 ubiquitin-protein ligase AMFR (Amfr) (Mus musculus (Mouse)).